We begin with the raw amino-acid sequence, 156 residues long: Endoribonuclease YbeY (156 aa).

Positions 119, 123, and 129 each coordinate Zn(2+).

This sequence belongs to the endoribonuclease YbeY family. It depends on Zn(2+) as a cofactor.

It localises to the cytoplasm. Its function is as follows. Single strand-specific metallo-endoribonuclease involved in late-stage 70S ribosome quality control and in maturation of the 3' terminus of the 16S rRNA. The sequence is that of Endoribonuclease YbeY from Buchnera aphidicola subsp. Cinara cedri (strain Cc).